Consider the following 415-residue polypeptide: Probable glucuronosyltransferase Os03g0287800 (415 aa).

The Cytoplasmic portion of the chain corresponds to M1–K25. A helical; Signal-anchor for type II membrane protein transmembrane segment spans residues A26–A43. At P44 to C415 the chain is on the lumenal side. 4 N-linked (GlcNAc...) asparagine glycosylation sites follow: N78, N165, N257, and N287.

The protein belongs to the glycosyltransferase 43 family.

The protein localises to the golgi apparatus membrane. Involved in the synthesis of glucuronoxylan hemicellulose in secondary cell walls. This chain is Probable glucuronosyltransferase Os03g0287800, found in Oryza sativa subsp. japonica (Rice).